The following is a 318-amino-acid chain: Beta-sarcoglycan (318 aa).

The segment at 1 to 32 is disordered; it reads MAAAAAAAAEQQSSNGPVKKSMREKAVERRNV. Over 1-65 the chain is Cytoplasmic; the sequence is MAAAAAAAAE…GLRGRKGNLA (65 aa). Positions 21–32 are enriched in basic and acidic residues; it reads SMREKAVERRNV. Residues 66–86 traverse the membrane as a helical; Signal-anchor for type II membrane protein segment; sequence ICVIVLLFLLAVINLIITLVI. Over 87-318 the chain is Extracellular; it reads WAVIRIGPNG…VSDNPCGNTH (232 aa). Asparagine 158, asparagine 211, and asparagine 258 each carry an N-linked (GlcNAc...) asparagine glycan. Cystine bridges form between cysteine 288–cysteine 314 and cysteine 290–cysteine 307.

This sequence belongs to the sarcoglycan beta/delta/gamma/zeta family. As to quaternary structure, cross-link to form 2 major subcomplexes: one consisting of SGCB, SGCD and SGCG and the other consisting of SGCB and SGCD. The association between SGCB and SGCG is particularly strong while SGCA is loosely associated with the other sarcoglycans. In terms of processing, disulfide bonds are present.

The protein localises to the cell membrane. Its subcellular location is the sarcolemma. It localises to the cytoplasm. It is found in the cytoskeleton. In terms of biological role, component of the sarcoglycan complex, a subcomplex of the dystrophin-glycoprotein complex which forms a link between the F-actin cytoskeleton and the extracellular matrix. This chain is Beta-sarcoglycan (SGCB), found in Oryctolagus cuniculus (Rabbit).